The sequence spans 265 residues: Chalcone synthase (265 aa).

C40 is a catalytic residue.

It belongs to the thiolase-like superfamily. Chalcone/stilbene synthases family.

The enzyme catalyses (E)-4-coumaroyl-CoA + 3 malonyl-CoA + 3 H(+) = 2',4,4',6'-tetrahydroxychalcone + 3 CO2 + 4 CoA. It participates in secondary metabolite biosynthesis; flavonoid biosynthesis. In terms of biological role, the primary product of this enzyme is 4,2',4',6'-tetrahydroxychalcone (also termed naringenin-chalcone or chalcone) which can under specific conditions spontaneously isomerize into naringenin. This chain is Chalcone synthase (CHSII), found in Medicago sativa (Alfalfa).